Reading from the N-terminus, the 203-residue chain is NADH-quinone oxidoreductase subunit C (203 aa).

This sequence belongs to the complex I 30 kDa subunit family. As to quaternary structure, NDH-1 is composed of 14 different subunits. Subunits NuoB, C, D, E, F, and G constitute the peripheral sector of the complex.

The protein localises to the cell inner membrane. It catalyses the reaction a quinone + NADH + 5 H(+)(in) = a quinol + NAD(+) + 4 H(+)(out). In terms of biological role, NDH-1 shuttles electrons from NADH, via FMN and iron-sulfur (Fe-S) centers, to quinones in the respiratory chain. The immediate electron acceptor for the enzyme in this species is believed to be ubiquinone. Couples the redox reaction to proton translocation (for every two electrons transferred, four hydrogen ions are translocated across the cytoplasmic membrane), and thus conserves the redox energy in a proton gradient. The sequence is that of NADH-quinone oxidoreductase subunit C from Bartonella tribocorum (strain CIP 105476 / IBS 506).